The following is a 719-amino-acid chain: Plasmin and fibronectin-binding protein A (719 aa).

The N-terminal stretch at 1 to 45 (MLKIVKKLEVLMKYFVPNEVFSIRKLKVGTCSVLLAISILGSQGI) is a signal peptide. 2 disordered regions span residues 56-76 (PMAT…SPTV) and 109-128 (IRSN…TSTN). PbH1 repeat units follow at residues 287–310 (SNNV…QIAG), 362–384 (SENV…LVTA), 397–419 (PSNI…RFTG), 497–523 (VSDI…ELLR), and 525–546 (SDNL…VIED). Residues 601–658 (NNLSDKNEKEKNKEEKQSNSNNVIDSNQKNGEFNSSKDNRQMNDKIDNKQDNKTEEVN) are a coiled coil. Positions 606 to 617 (KNEKEKNKEEKQ) are enriched in basic and acidic residues. Positions 606 to 655 (KNEKEKNKEEKQSNSNNVIDSNQKNGEFNSSKDNRQMNDKIDNKQDNKTE) are disordered. Residues 623–634 (VIDSNQKNGEFN) are compositionally biased toward polar residues. Positions 635–655 (SSKDNRQMNDKIDNKQDNKTE) are enriched in basic and acidic residues. An LPXTG sorting signal motif is present at residues 685-689 (LPKTG). A Pentaglycyl murein peptidoglycan amidated threonine modification is found at Thr-688. The propeptide at 689–719 (GSNKIMELFLTVTGIGLLLTLKGLKYYGKDK) is removed by sortase.

It is found in the secreted. Its subcellular location is the cell wall. Its function is as follows. Acts as a fibronectin-dependent adhesin and invasin. Binds host (in this case human) fibronectin, plasmin, plasminogen, and human serum albumin. Where the bacteria adhere to human cells there is major recruitment of microvilli which seem to fuse to cover the streptococcal chains. Antibodies to this protein reduce bacterial growth in human blood. This Streptococcus pneumoniae (strain ATCC BAA-255 / R6) protein is Plasmin and fibronectin-binding protein A (pfbA).